The sequence spans 546 residues: Chaperonin GroEL (546 aa).

ATP contacts are provided by residues 30–33, K51, 87–91, G415, 479–481, and D495; these read TLGP, DGTTT, and NAA. Residues 526–546 form a disordered region; that stretch reads KEEKPDLSGAGAGMGGMGGMM. The segment covering 535–546 has biased composition (gly residues); the sequence is AGAGMGGMGGMM.

This sequence belongs to the chaperonin (HSP60) family. As to quaternary structure, forms a cylinder of 14 subunits composed of two heptameric rings stacked back-to-back. Interacts with the co-chaperonin GroES.

The protein localises to the cytoplasm. It carries out the reaction ATP + H2O + a folded polypeptide = ADP + phosphate + an unfolded polypeptide.. Functionally, together with its co-chaperonin GroES, plays an essential role in assisting protein folding. The GroEL-GroES system forms a nano-cage that allows encapsulation of the non-native substrate proteins and provides a physical environment optimized to promote and accelerate protein folding. This chain is Chaperonin GroEL, found in Wigglesworthia glossinidia brevipalpis.